Here is a 298-residue protein sequence, read N- to C-terminus: Tryptophan 2,3-dioxygenase (298 aa).

Substrate is bound by residues 51 to 55, Y113, and R117; that span reads FIIQH. H240 serves as a coordination point for heme. T254 provides a ligand contact to substrate.

The protein belongs to the tryptophan 2,3-dioxygenase family. Homotetramer. The cofactor is heme.

The enzyme catalyses L-tryptophan + O2 = N-formyl-L-kynurenine. It participates in amino-acid degradation; L-tryptophan degradation via kynurenine pathway; L-kynurenine from L-tryptophan: step 1/2. Its function is as follows. Heme-dependent dioxygenase that catalyzes the oxidative cleavage of the L-tryptophan (L-Trp) pyrrole ring and converts L-tryptophan to N-formyl-L-kynurenine. Catalyzes the oxidative cleavage of the indole moiety. The chain is Tryptophan 2,3-dioxygenase from Xanthomonas euvesicatoria pv. vesicatoria (strain 85-10) (Xanthomonas campestris pv. vesicatoria).